A 258-amino-acid polypeptide reads, in one-letter code: Acetylglutamate kinase (258 aa).

Residues 41–42 (GG), Arg-63, and Asn-156 each bind substrate.

It belongs to the acetylglutamate kinase family. ArgB subfamily. Homodimer.

The protein resides in the cytoplasm. The catalysed reaction is N-acetyl-L-glutamate + ATP = N-acetyl-L-glutamyl 5-phosphate + ADP. It participates in amino-acid biosynthesis; L-arginine biosynthesis; N(2)-acetyl-L-ornithine from L-glutamate: step 2/4. Catalyzes the ATP-dependent phosphorylation of N-acetyl-L-glutamate. The chain is Acetylglutamate kinase from Geobacillus stearothermophilus (Bacillus stearothermophilus).